Here is a 463-residue protein sequence, read N- to C-terminus: SCF E3 ubiquitin ligase complex F-box protein pof2 (463 aa).

Residues 1–42 form the F-box domain; the sequence is MRVPNEVCFNILSYLEADELRCKSTVCTSWRNFIIPTLWEKV. LRR repeat units lie at residues 145–170, 171–196, 198–220, 225–247, 249–271, 278–299, 304–326, 328–353, 354–378, and 380–405; these read CPNL…IIKR, CPYL…LSEK, DLIE…SRLV, GLKE…LNLN, ELDA…DIEL, KLNS…LSLT, SLTT…CLLK, CKNI…IAKL, PYLQ…LSGS, and SRNL…LMYN.

As to quaternary structure, part of a SCF E3 ubiquitin ligase complex. Interacts with skp1.

The protein localises to the mitochondrion. Functionally, involved in substrate recognition in ubiquitin-dependent degradation. The polypeptide is SCF E3 ubiquitin ligase complex F-box protein pof2 (pof2) (Schizosaccharomyces pombe (strain 972 / ATCC 24843) (Fission yeast)).